The primary structure comprises 1036 residues: Protein translocase subunit SecA, chloroplastic (1036 aa).

The N-terminal 76 residues, Met1 to Ala76, are a transit peptide targeting the chloroplast. ATP is bound at residue Met186 to Thr193. The interval Asn995–Thr1036 is disordered. Residues Gln1000–Gly1015 are compositionally biased toward basic and acidic residues. Residues Asn1020 to Thr1036 show a composition bias toward polar residues.

It belongs to the SecA family.

It is found in the plastid. The protein localises to the chloroplast stroma. It localises to the chloroplast thylakoid membrane. The enzyme catalyses ATP + H2O + chloroplast-proteinSide 1 = ADP + phosphate + chloroplast-proteinSide 2.. Functionally, has a central role in coupling the hydrolysis of ATP to the transfer of proteins across the thylakoid membrane. The polypeptide is Protein translocase subunit SecA, chloroplastic (Spinacia oleracea (Spinach)).